We begin with the raw amino-acid sequence, 440 residues long: UDP-N-acetylmuramoylalanine--D-glutamate ligase (440 aa).

115–121 contributes to the ATP binding site; the sequence is GSNGKST.

This sequence belongs to the MurCDEF family.

The protein resides in the cytoplasm. The enzyme catalyses UDP-N-acetyl-alpha-D-muramoyl-L-alanine + D-glutamate + ATP = UDP-N-acetyl-alpha-D-muramoyl-L-alanyl-D-glutamate + ADP + phosphate + H(+). It participates in cell wall biogenesis; peptidoglycan biosynthesis. Functionally, cell wall formation. Catalyzes the addition of glutamate to the nucleotide precursor UDP-N-acetylmuramoyl-L-alanine (UMA). This chain is UDP-N-acetylmuramoylalanine--D-glutamate ligase, found in Aliivibrio fischeri (strain MJ11) (Vibrio fischeri).